The primary structure comprises 217 residues: Phosphoribosylformylglycinamidine synthase subunit PurQ (217 aa).

The Glutamine amidotransferase type-1 domain occupies 2 to 217 (NIGIIVFPGS…GKSILSTLLS (216 aa)). Cys-86 functions as the Nucleophile in the catalytic mechanism. Catalysis depends on residues His-194 and Glu-196.

As to quaternary structure, part of the FGAM synthase complex composed of 1 PurL, 1 PurQ and 2 PurS subunits.

The protein resides in the cytoplasm. It carries out the reaction N(2)-formyl-N(1)-(5-phospho-beta-D-ribosyl)glycinamide + L-glutamine + ATP + H2O = 2-formamido-N(1)-(5-O-phospho-beta-D-ribosyl)acetamidine + L-glutamate + ADP + phosphate + H(+). The enzyme catalyses L-glutamine + H2O = L-glutamate + NH4(+). It participates in purine metabolism; IMP biosynthesis via de novo pathway; 5-amino-1-(5-phospho-D-ribosyl)imidazole from N(2)-formyl-N(1)-(5-phospho-D-ribosyl)glycinamide: step 1/2. Part of the phosphoribosylformylglycinamidine synthase complex involved in the purines biosynthetic pathway. Catalyzes the ATP-dependent conversion of formylglycinamide ribonucleotide (FGAR) and glutamine to yield formylglycinamidine ribonucleotide (FGAM) and glutamate. The FGAM synthase complex is composed of three subunits. PurQ produces an ammonia molecule by converting glutamine to glutamate. PurL transfers the ammonia molecule to FGAR to form FGAM in an ATP-dependent manner. PurS interacts with PurQ and PurL and is thought to assist in the transfer of the ammonia molecule from PurQ to PurL. In Prochlorococcus marinus (strain NATL2A), this protein is Phosphoribosylformylglycinamidine synthase subunit PurQ.